A 1657-amino-acid chain; its full sequence is Endoribonuclease Dicer homolog 4 (1657 aa).

Residues 1-14 are compositionally biased toward low complexity; it reads MGDAAAAAPAAAAA. The disordered stretch occupies residues 1-26; the sequence is MGDAAAAAPAAAAAGPSSTRGEPKDP. The region spanning 37-214 is the Helicase ATP-binding domain; that stretch reads LCKRAVEENI…SHSFTEKGGR (178 aa). 50–57 contacts ATP; the sequence is LGTGCGKT. The short motif at 157-160 is the DECH box element; sequence DECH. The Helicase C-terminal domain maps to 400–567; that stretch reads NKFSVLINVL…TSNDMFDCLE (168 aa). One can recognise a Dicer dsRNA-binding fold domain in the interval 585 to 675; sequence SVSLLHCYCD…LPGPGSRKNK (91 aa). In terms of domain architecture, PAZ spans 856 to 978; it reads DVSVHASYSS…LPPELCSLKV (123 aa). 2 consecutive RNase III domains span residues 1010–1173 and 1214–1358; these read DVML…VEGG and IAGL…LDSG. Glutamate 1252, aspartate 1344, and glutamate 1347 together coordinate Mg(2+). The DRBM 1 domain maps to 1384 to 1451; the sequence is NPMRELRELC…AQETLSKLKN (68 aa). A disordered region spans residues 1525-1556; it reads GSGKHDVNNGRNNQPKLATQSGRLPSEATEKS. Residues 1533 to 1547 show a composition bias toward polar residues; that stretch reads NGRNNQPKLATQSGR. The DRBM 2 domain maps to 1569–1645; the sequence is TARSFLFELC…AQGALWCLKQ (77 aa).

The protein belongs to the helicase family. Dicer subfamily. May interact with ARGONAUTE1 or PINHEAD through their common PAZ domains. Mg(2+) serves as cofactor. Mn(2+) is required as a cofactor. Expressed in roots, leaf blades, leaf sheaths, shoot apices and spikelets.

The protein localises to the nucleus. Functionally, involved in the RNA silencing pathway. Cleaves double-stranded RNA to produce small interfering RNAs (siRNAs) which target the selective destruction of complementary RNAs. Required for the production of 21 nucleotide siRNAs. Regulates shoot apical meristem (SAM) initiation and maintenance, leaf polarization and lemma polarity through the trans-acting siRNAS (ta-siRNAs) pathway, which probably modulate the expression of the ARF2, ARF3, ARF4, ARF14 and ARF15 genes. Can process endogenous 21 nucleotide siRNAs derived from an imperfect inverted repeat. May not be involved in microRNAs (miRNAs) production. The sequence is that of Endoribonuclease Dicer homolog 4 (DCL4) from Oryza sativa subsp. japonica (Rice).